The primary structure comprises 374 residues: tRNA-specific 2-thiouridylase MnmA (374 aa).

ATP-binding positions include 12 to 19 (GMSGGVDS) and Met-38. Positions 98–100 (NPD) are interaction with target base in tRNA. Cys-103 serves as the catalytic Nucleophile. A disulfide bridge links Cys-103 with Cys-202. Residue Gly-128 coordinates ATP. The tract at residues 152–154 (KDQ) is interaction with tRNA. Cys-202 functions as the Cysteine persulfide intermediate in the catalytic mechanism. The interaction with tRNA stretch occupies residues 316-317 (RY).

The protein belongs to the MnmA/TRMU family.

Its subcellular location is the cytoplasm. The catalysed reaction is S-sulfanyl-L-cysteinyl-[protein] + uridine(34) in tRNA + AH2 + ATP = 2-thiouridine(34) in tRNA + L-cysteinyl-[protein] + A + AMP + diphosphate + H(+). In terms of biological role, catalyzes the 2-thiolation of uridine at the wobble position (U34) of tRNA, leading to the formation of s(2)U34. This is tRNA-specific 2-thiouridylase MnmA from Vibrio parahaemolyticus serotype O3:K6 (strain RIMD 2210633).